Consider the following 80-residue polypeptide: Lantibiotic Flvalpha.a (80 aa).

Positions 1 to 38 (MNKNPIYRSEEEAKDIACGNVAAELDENSQALDAINGA) are cleaved as a propeptide — cleaved by FlvT. 2 positions are modified to 2,3-didehydrobutyrine; by FlvM1: T43 and T47. A cross-link (beta-methyllanthionine (Thr-Cys); by FlvM1) is located at residues 52–55 (TVGC). Residues 58 to 68 (SYGLGNGGYCC) constitute a cross-link (lanthionine (Ser-Cys); by FlvM1). 2 cross-links (beta-methyllanthionine (Thr-Cys); by FlvM1) span residues 69–74 (TYTVEC) and 71–78 (TVECSKTC).

Post-translationally, the lanthionine formed by Ser-58 and Cys-68 forms a putative lipid II binding motif. In terms of processing, maturation of FlvA1 peptides involves the enzymatic conversion of Thr, and Ser into dehydrated AA and the formation of thioether bonds with cysteines. Modifications are processed by the flavecin synthetase FlvM1. This is followed by membrane translocation and cleavage of the modified precursor. Contains DL-lanthionine and DL-beta-methyllanthionine, when coepressed in E.coli with the flavecin synthetase FlvM1.

The protein localises to the secreted. Functionally, lanthionine-containing peptide antibiotic (lantibiotic) only active on Gram-positive bacteria in synergy with Flvbeta peptides, which are encoded by the same operon than Flvalpha.a. Shows antibacterial activity in synergy with Flvbeta.b, Flvbeta.c, Flvbeta.e and Flvbeta.g. Does not show antibacterial activity when tested with Flvbeta.a, Flvbeta.d, Flvbeta.f and Flvbeta.h. The bactericidal activity of lantibiotics is based on depolarization of energized bacterial cytoplasmic membranes, initiated by the formation of aqueous transmembrane pores. The sequence is that of Lantibiotic Flvalpha.a from Ruminococcus flavefaciens.